The chain runs to 552 residues: uncharacterized protein (552 aa).

29 to 36 (GENAWGKS) contacts ATP. Residues 379–469 (RCWLLVEGET…AEREHLTALP (91 aa)) form the Toprim domain.

This is an uncharacterized protein from Escherichia coli (strain K12).